A 303-amino-acid chain; its full sequence is UDP-N-acetylenolpyruvoylglucosamine reductase (303 aa).

Positions 29–196 constitute an FAD-binding PCMH-type domain; the sequence is KIGGPADILI…LEAVLQLEQK (168 aa). Residue Arg174 is part of the active site. Ser225 functions as the Proton donor in the catalytic mechanism. The active site involves Glu295.

The protein belongs to the MurB family. Requires FAD as cofactor.

The protein resides in the cytoplasm. The catalysed reaction is UDP-N-acetyl-alpha-D-muramate + NADP(+) = UDP-N-acetyl-3-O-(1-carboxyvinyl)-alpha-D-glucosamine + NADPH + H(+). The protein operates within cell wall biogenesis; peptidoglycan biosynthesis. Its function is as follows. Cell wall formation. This Bacillus velezensis (strain DSM 23117 / BGSC 10A6 / LMG 26770 / FZB42) (Bacillus amyloliquefaciens subsp. plantarum) protein is UDP-N-acetylenolpyruvoylglucosamine reductase.